Here is a 265-residue protein sequence, read N- to C-terminus: Glutamate racemase (265 aa).

Residues Asp-9 to Ser-10 and Tyr-41 to Ser-42 contribute to the substrate site. Cys-73 (proton donor/acceptor) is an active-site residue. Position 74–75 (Asn-74–Thr-75) interacts with substrate. The active-site Proton donor/acceptor is the Cys-184. Residue Thr-185–His-186 coordinates substrate.

This sequence belongs to the aspartate/glutamate racemases family.

The catalysed reaction is L-glutamate = D-glutamate. It functions in the pathway cell wall biogenesis; peptidoglycan biosynthesis. Its function is as follows. Provides the (R)-glutamate required for cell wall biosynthesis. This is Glutamate racemase from Haemophilus ducreyi (strain 35000HP / ATCC 700724).